Reading from the N-terminus, the 561-residue chain is Putative pectinesterase/pectinesterase inhibitor 24 (561 aa).

A helical transmembrane segment spans residues 26 to 46; the sequence is IAIIAVSLVILAGIVIGAVFG. The pectinesterase inhibitor 24 stretch occupies residues 64–211; sequence DSISVSVKAV…TELTSNALAI (148 aa). 4 N-linked (GlcNAc...) asparagine glycosylation sites follow: Asn92, Asn130, Asn148, and Asn200. Residues 255–548 are pectinesterase 24; the sequence is DIVVAKDGSG…TVKPFIDGGR (294 aa). The substrate site is built by Thr330 and Gln360. Asp383 functions as the Proton donor; for pectinesterase activity in the catalytic mechanism. Cys397 and Cys417 are joined by a disulfide. Asp404 serves as the catalytic Nucleophile; for pectinesterase activity. Residues Arg468 and Trp470 each coordinate substrate. The N-linked (GlcNAc...) asparagine glycan is linked to Asn472.

In the N-terminal section; belongs to the PMEI family. This sequence in the C-terminal section; belongs to the pectinesterase family.

The protein localises to the membrane. The enzyme catalyses [(1-&gt;4)-alpha-D-galacturonosyl methyl ester](n) + n H2O = [(1-&gt;4)-alpha-D-galacturonosyl](n) + n methanol + n H(+). The protein operates within glycan metabolism; pectin degradation; 2-dehydro-3-deoxy-D-gluconate from pectin: step 1/5. Acts in the modification of cell walls via demethylesterification of cell wall pectin. This is Putative pectinesterase/pectinesterase inhibitor 24 (PME24) from Arabidopsis thaliana (Mouse-ear cress).